We begin with the raw amino-acid sequence, 105 residues long: Transmembrane protein 273 (105 aa).

Residues 1 to 19 (MNLGVSMLRILFLLDVGGA) form the signal peptide. Topologically, residues 20-38 (QVLATGKTPGAEIDFKYAL) are extracellular. A helical transmembrane segment spans residues 39–59 (IGTAVGVAISAGFLALKICMI). Over 60 to 105 (RRHLFDDDSSDLKSTPGGLSDTIPLKKRAPRRNHNFSKRDAQVIEL) the chain is Cytoplasmic.

The protein localises to the membrane. This chain is Transmembrane protein 273, found in Homo sapiens (Human).